The sequence spans 209 residues: Small ribosomal subunit protein uS4 (209 aa).

Positions 99 to 159 (SRLDSVCYRM…EKSKAQLRIK (61 aa)) constitute an S4 RNA-binding domain.

It belongs to the universal ribosomal protein uS4 family. Part of the 30S ribosomal subunit. Contacts protein S5. The interaction surface between S4 and S5 is involved in control of translational fidelity.

Its function is as follows. One of the primary rRNA binding proteins, it binds directly to 16S rRNA where it nucleates assembly of the body of the 30S subunit. In terms of biological role, with S5 and S12 plays an important role in translational accuracy. The protein is Small ribosomal subunit protein uS4 of Thiobacillus denitrificans (strain ATCC 25259 / T1).